Consider the following 426-residue polypeptide: Adenylosuccinate synthetase (426 aa).

GTP is bound by residues 12–18 and 40–42; these read GDEGKGK and GHT. The active-site Proton acceptor is aspartate 13. The Mg(2+) site is built by aspartate 13 and glycine 40. IMP-binding positions include 13–16, 38–41, threonine 131, arginine 145, glutamine 226, threonine 241, and arginine 305; these read DEGK and NAGH. The active-site Proton donor is the histidine 41. 301-307 is a binding site for substrate; it reads ATTGRKR. GTP is bound by residues arginine 307, 333 to 335, and 415 to 417; these read KLD and SVG.

Belongs to the adenylosuccinate synthetase family. As to quaternary structure, homodimer. It depends on Mg(2+) as a cofactor.

It is found in the cytoplasm. It carries out the reaction IMP + L-aspartate + GTP = N(6)-(1,2-dicarboxyethyl)-AMP + GDP + phosphate + 2 H(+). The protein operates within purine metabolism; AMP biosynthesis via de novo pathway; AMP from IMP: step 1/2. Its function is as follows. Plays an important role in the de novo pathway of purine nucleotide biosynthesis. Catalyzes the first committed step in the biosynthesis of AMP from IMP. The chain is Adenylosuccinate synthetase from Nitratidesulfovibrio vulgaris (strain ATCC 29579 / DSM 644 / CCUG 34227 / NCIMB 8303 / VKM B-1760 / Hildenborough) (Desulfovibrio vulgaris).